We begin with the raw amino-acid sequence, 130 residues long: Holo-[acyl-carrier-protein] synthase (130 aa).

2 residues coordinate Mg(2+): D9 and E58.

The protein belongs to the P-Pant transferase superfamily. AcpS family. Mg(2+) serves as cofactor.

The protein resides in the cytoplasm. It catalyses the reaction apo-[ACP] + CoA = holo-[ACP] + adenosine 3',5'-bisphosphate + H(+). Transfers the 4'-phosphopantetheine moiety from coenzyme A to a Ser of acyl-carrier-protein. This chain is Holo-[acyl-carrier-protein] synthase, found in Mycobacterium sp. (strain JLS).